The chain runs to 329 residues: Tetraacyldisaccharide 4'-kinase (329 aa).

57-64 is a binding site for ATP; it reads TAGGSGKT.

The protein belongs to the LpxK family.

The enzyme catalyses a lipid A disaccharide + ATP = a lipid IVA + ADP + H(+). The protein operates within glycolipid biosynthesis; lipid IV(A) biosynthesis; lipid IV(A) from (3R)-3-hydroxytetradecanoyl-[acyl-carrier-protein] and UDP-N-acetyl-alpha-D-glucosamine: step 6/6. Transfers the gamma-phosphate of ATP to the 4'-position of a tetraacyldisaccharide 1-phosphate intermediate (termed DS-1-P) to form tetraacyldisaccharide 1,4'-bis-phosphate (lipid IVA). In Thiobacillus denitrificans (strain ATCC 25259 / T1), this protein is Tetraacyldisaccharide 4'-kinase.